The sequence spans 418 residues: MNLVAVGVNHTTADVELRERLAFSTQQAEVALASLREMPGVREAALLSTCNRTELYCLTDDVTPNFAQWLASSRNLSVERLSTVLYQHTGEQALEHMMRVAGGLDSLVLGEPQILGQMREAYARAHEAGLLNGELSRLFQEVFSVAKRIRTETGIGANPVSVAYAAVSFARHIFADLKKSRALLIGAGEMIELVARHLSEQQVQEITIANRTQERASELAAAVGGRGISLEELPVALERADILISCTAAPLPIMGKGMVERALKKRRHRPMFMVDIAVPRDIEPEVGELGDVYLYTVDHLQEAIQENVRSRQQAAQEASELIRDAIVRHRRQRREQDAVKVLRDYREQRKAMAESELEKALQQLRNGGDAEQVLRRFQHSLVNKWLHSPSVTLRKMAADGRAEALLLARELLLDDDQS.

Substrate is bound by residues 49-52 (TCNR), serine 106, 111-113 (EPQ), and glutamine 117. Cysteine 50 (nucleophile) is an active-site residue. NADP(+) is bound at residue 186-191 (GAGEMI).

It belongs to the glutamyl-tRNA reductase family. As to quaternary structure, homodimer.

It carries out the reaction (S)-4-amino-5-oxopentanoate + tRNA(Glu) + NADP(+) = L-glutamyl-tRNA(Glu) + NADPH + H(+). It functions in the pathway porphyrin-containing compound metabolism; protoporphyrin-IX biosynthesis; 5-aminolevulinate from L-glutamyl-tRNA(Glu): step 1/2. In terms of biological role, catalyzes the NADPH-dependent reduction of glutamyl-tRNA(Glu) to glutamate 1-semialdehyde (GSA). The protein is Glutamyl-tRNA reductase of Alcanivorax borkumensis (strain ATCC 700651 / DSM 11573 / NCIMB 13689 / SK2).